Reading from the N-terminus, the 310-residue chain is MPLKVVFMGTPDFAVPTLAEIVGSGHEVVAVYTRAPAPAGRGMALRPSPVQALAERFGLPVRTPATLRSEEAVEIFRGHDADVAVVVAYGMILPPAILDAPRLGCLNLHASILPRWRGAAPIQRAVMAGDSETGVAVMRMEPGLDTGPVAMLERVAITPEMTAGELHDRLMPLGADLMNRALGALERGGLTFTPQAAEGIVYAHKITNEEARLDWAEPAQRLHDTIRGLSPFPGAFFMADLGRGPERVKVLRASLADGRAEPGTLLDAHGTVACGEGAIRLLRVQPAGKGPMEAGDFLRGRRLEPGARLA.

A (6S)-5,6,7,8-tetrahydrofolate-binding site is contributed by 111-114; the sequence is SILP.

This sequence belongs to the Fmt family.

The enzyme catalyses L-methionyl-tRNA(fMet) + (6R)-10-formyltetrahydrofolate = N-formyl-L-methionyl-tRNA(fMet) + (6S)-5,6,7,8-tetrahydrofolate + H(+). Its function is as follows. Attaches a formyl group to the free amino group of methionyl-tRNA(fMet). The formyl group appears to play a dual role in the initiator identity of N-formylmethionyl-tRNA by promoting its recognition by IF2 and preventing the misappropriation of this tRNA by the elongation apparatus. In Methylobacterium nodulans (strain LMG 21967 / CNCM I-2342 / ORS 2060), this protein is Methionyl-tRNA formyltransferase.